The chain runs to 498 residues: Zinc finger protein 497 (498 aa).

Residues 30–104 (SEGAVSGGWG…LRPSPLPEEP (75 aa)) form a disordered region. C2H2-type zinc fingers lie at residues 106–128 (CRCG…RRVH), 134–156 (YTCP…QRIH), 162–184 (YACR…QETH), 190–212 (FRCP…RRTH), 218–240 (YECP…RRVH), 246–268 (HACR…LKIH), 274–296 (HACP…RRTH), 302–324 (FPCA…QRTH), 330–352 (FECA…RRVH), 358–380 (HACA…RRTH), 386–408 (FACA…RLSH), 414–436 (FACA…QRLH), 442–464 (FVCA…RRTH), and 470–492 (YACG…QKRH).

The protein belongs to the krueppel C2H2-type zinc-finger protein family.

It localises to the nucleus. May be involved in transcriptional regulation. This chain is Zinc finger protein 497 (ZNF497), found in Homo sapiens (Human).